We begin with the raw amino-acid sequence, 128 residues long: Disintegrin gabonin-1 (128 aa).

The N-terminal stretch at 1-20 (MIQVLLVIICLAVFPYQGSS) is a signal peptide. Positions 21–47 (IILESGNVNDYEIVYPKKVTVLPTGAM) are excised as a propeptide. The Disintegrin domain occupies 47-112 (MNSAHPCCDP…DCPRNPNKGE (66 aa)). 4 disulfides stabilise this stretch: cysteine 53–cysteine 76, cysteine 67–cysteine 73, cysteine 72–cysteine 97, and cysteine 85–cysteine 104. Residues 89 to 91 (RGD) carry the Cell attachment site motif. A disordered region spans residues 108-128 (PNKGESDELEWSAAATGSVLM).

This sequence belongs to the disintegrin family. Dimeric disintegrin subfamily. As to quaternary structure, heterodimer with bitisgabonin (bitisgabonin-1 is the name of the heterodimer); disulfide-linked. Expressed by the venom gland.

The protein localises to the secreted. The heterodimer bitisgabonin-1 is a potent inhibitor of the adhesion of the RGD-dependent integrin alpha-5/beta-1 (ITGA5/ITGB1) to immobilized fibronectin. This chain is Disintegrin gabonin-1, found in Bitis gabonica (Gaboon adder).